Reading from the N-terminus, the 527-residue chain is Probable protein kinase UbiB (527 aa).

Residues 118-501 (DFERVPVASA…QKRTNRLLQG (384 aa)) enclose the Protein kinase domain. Residues 124-132 (VASASIAQV) and lysine 150 each bind ATP. Aspartate 285 (proton acceptor) is an active-site residue. Residues 502 to 522 (LLMFGVAVGVGAVLARAWLAI) form a helical membrane-spanning segment.

Belongs to the ABC1 family. UbiB subfamily.

The protein localises to the cell inner membrane. It functions in the pathway cofactor biosynthesis; ubiquinone biosynthesis [regulation]. Is probably a protein kinase regulator of UbiI activity which is involved in aerobic coenzyme Q (ubiquinone) biosynthesis. The protein is Probable protein kinase UbiB of Paraburkholderia phymatum (strain DSM 17167 / CIP 108236 / LMG 21445 / STM815) (Burkholderia phymatum).